The primary structure comprises 576 residues: Apolipoprotein N-acyltransferase 1 (576 aa).

The next 7 membrane-spanning stretches (helical) occupy residues 15–35 (LILC…FSFF), 38–58 (GVFA…TSIW), 60–80 (AFLW…YWIP), 92–112 (FVSI…FFLF), 128–148 (YILL…FQIF), 168–188 (ICGV…FLIL), and 204–224 (IASL…IGYI). The region spanning 236–538 (LSVLMIQPDT…TGTRAFSIRL (303 aa)) is the CN hydrolase domain. Glutamate 285 (proton acceptor) is an active-site residue. Residue lysine 355 is part of the active site. Cysteine 446 (nucleophile) is an active-site residue. A helical membrane pass occupies residues 549-569 (FGNSFLWIFCILILISRLIFV).

The protein belongs to the CN hydrolase family. Apolipoprotein N-acyltransferase subfamily.

It localises to the cell inner membrane. It carries out the reaction N-terminal S-1,2-diacyl-sn-glyceryl-L-cysteinyl-[lipoprotein] + a glycerophospholipid = N-acyl-S-1,2-diacyl-sn-glyceryl-L-cysteinyl-[lipoprotein] + a 2-acyl-sn-glycero-3-phospholipid + H(+). Its pathway is protein modification; lipoprotein biosynthesis (N-acyl transfer). Its function is as follows. Catalyzes the phospholipid dependent N-acylation of the N-terminal cysteine of apolipoprotein, the last step in lipoprotein maturation. In Leptospira interrogans serogroup Icterohaemorrhagiae serovar copenhageni (strain Fiocruz L1-130), this protein is Apolipoprotein N-acyltransferase 1.